The chain runs to 115 residues: T cell receptor beta variable 11-2 (115 aa).

An N-terminal signal peptide occupies residues Met1–Ala21. In terms of domain architecture, Ig-like spans Gly22–Leu115. Cysteines 42 and 111 form a disulfide.

Alpha-beta TR is a heterodimer composed of an alpha and beta chain; disulfide-linked. The alpha-beta TR is associated with the transmembrane signaling CD3 coreceptor proteins to form the TR-CD3 (TcR or TCR). The assembly of alpha-beta TR heterodimers with CD3 occurs in the endoplasmic reticulum where a single alpha-beta TR heterodimer associates with one CD3D-CD3E heterodimer, one CD3G-CD3E heterodimer and one CD247 homodimer forming a stable octameric structure. CD3D-CD3E and CD3G-CD3E heterodimers preferentially associate with TR alpha and TR beta chains, respectively. The association of the CD247 homodimer is the last step of TcR assembly in the endoplasmic reticulum and is required for transport to the cell surface.

It is found in the cell membrane. In terms of biological role, v region of the variable domain of T cell receptor (TR) beta chain that participates in the antigen recognition. Alpha-beta T cell receptors are antigen specific receptors which are essential to the immune response and are present on the cell surface of T lymphocytes. Recognize peptide-major histocompatibility (MH) (pMH) complexes that are displayed by antigen presenting cells (APC), a prerequisite for efficient T cell adaptive immunity against pathogens. Binding of alpha-beta TR to pMH complex initiates TR-CD3 clustering on the cell surface and intracellular activation of LCK that phosphorylates the ITAM motifs of CD3G, CD3D, CD3E and CD247 enabling the recruitment of ZAP70. In turn ZAP70 phosphorylates LAT, which recruits numerous signaling molecules to form the LAT signalosome. The LAT signalosome propagates signal branching to three major signaling pathways, the calcium, the mitogen-activated protein kinase (MAPK) kinase and the nuclear factor NF-kappa-B (NF-kB) pathways, leading to the mobilization of transcription factors that are critical for gene expression and essential for T cell growth and differentiation. The T cell repertoire is generated in the thymus, by V-(D)-J rearrangement. This repertoire is then shaped by intrathymic selection events to generate a peripheral T cell pool of self-MH restricted, non-autoaggressive T cells. Post-thymic interaction of alpha-beta TR with the pMH complexes shapes TR structural and functional avidity. This is T cell receptor beta variable 11-2 from Homo sapiens (Human).